The chain runs to 272 residues: Shikimate dehydrogenase (NADP(+)) (272 aa).

Residues 14–16 and T61 each bind shikimate; that span reads SKS. K65 serves as the catalytic Proton acceptor. E77 is an NADP(+) binding site. Shikimate contacts are provided by N86 and D102. NADP(+) is bound by residues 126 to 130, 149 to 154, and M213; these read GAGGA and NRTVSR. Y215 is a shikimate binding site. G237 provides a ligand contact to NADP(+).

Belongs to the shikimate dehydrogenase family. Homodimer.

It carries out the reaction shikimate + NADP(+) = 3-dehydroshikimate + NADPH + H(+). Its pathway is metabolic intermediate biosynthesis; chorismate biosynthesis; chorismate from D-erythrose 4-phosphate and phosphoenolpyruvate: step 4/7. Functionally, involved in the biosynthesis of the chorismate, which leads to the biosynthesis of aromatic amino acids. Catalyzes the reversible NADPH linked reduction of 3-dehydroshikimate (DHSA) to yield shikimate (SA). The sequence is that of Shikimate dehydrogenase (NADP(+)) from Escherichia coli O139:H28 (strain E24377A / ETEC).